We begin with the raw amino-acid sequence, 361 residues long: Chorismate synthase (361 aa).

Residues Arg48 and Arg54 each coordinate NADP(+). FMN is bound by residues 125-127 (RSS), 238-239 (NA), Gly278, 293-297 (KPTSS), and Arg319.

It belongs to the chorismate synthase family. In terms of assembly, homotetramer. FMNH2 serves as cofactor.

The enzyme catalyses 5-O-(1-carboxyvinyl)-3-phosphoshikimate = chorismate + phosphate. It functions in the pathway metabolic intermediate biosynthesis; chorismate biosynthesis; chorismate from D-erythrose 4-phosphate and phosphoenolpyruvate: step 7/7. Its function is as follows. Catalyzes the anti-1,4-elimination of the C-3 phosphate and the C-6 proR hydrogen from 5-enolpyruvylshikimate-3-phosphate (EPSP) to yield chorismate, which is the branch point compound that serves as the starting substrate for the three terminal pathways of aromatic amino acid biosynthesis. This reaction introduces a second double bond into the aromatic ring system. In Escherichia coli O7:K1 (strain IAI39 / ExPEC), this protein is Chorismate synthase.